A 395-amino-acid polypeptide reads, in one-letter code: Testis-expressed protein 44 (395 aa).

4 disordered regions span residues M1–A32, W46–S100, K133–S215, and F235–P258. Over residues S53–S65 the composition is skewed to polar residues. Residues P87–Q98 are compositionally biased toward low complexity. Residues S192 to A207 show a composition bias toward basic and acidic residues. At S333 the chain carries Phosphoserine.

In terms of tissue distribution, testis. Detected in germ cells at all stages of the seminiferous epithelium, strong expression in elongating spermatids (at protein level).

The protein resides in the cytoplasm. The sequence is that of Testis-expressed protein 44 from Homo sapiens (Human).